The sequence spans 85 residues: Small ribosomal subunit protein uS17 (85 aa).

It belongs to the universal ribosomal protein uS17 family. In terms of assembly, part of the 30S ribosomal subunit.

One of the primary rRNA binding proteins, it binds specifically to the 5'-end of 16S ribosomal RNA. This Lachnospira eligens (strain ATCC 27750 / DSM 3376 / VPI C15-48 / C15-B4) (Eubacterium eligens) protein is Small ribosomal subunit protein uS17.